A 195-amino-acid chain; its full sequence is ATP-dependent Clp protease proteolytic subunit (195 aa).

Ser94 serves as the catalytic Nucleophile. Residue His119 is part of the active site.

It belongs to the peptidase S14 family. In terms of assembly, component of the chloroplastic Clp protease core complex.

It is found in the plastid. The protein localises to the chloroplast stroma. It carries out the reaction Hydrolysis of proteins to small peptides in the presence of ATP and magnesium. alpha-casein is the usual test substrate. In the absence of ATP, only oligopeptides shorter than five residues are hydrolyzed (such as succinyl-Leu-Tyr-|-NHMec, and Leu-Tyr-Leu-|-Tyr-Trp, in which cleavage of the -Tyr-|-Leu- and -Tyr-|-Trp bonds also occurs).. Cleaves peptides in various proteins in a process that requires ATP hydrolysis. Has a chymotrypsin-like activity. Plays a major role in the degradation of misfolded proteins. This chain is ATP-dependent Clp protease proteolytic subunit, found in Cycas taitungensis (Prince sago).